The primary structure comprises 247 residues: tRNA (guanine-N(1)-)-methyltransferase (247 aa).

S-adenosyl-L-methionine-binding positions include Gly116 and 135 to 140 (IGDYVL).

The protein belongs to the RNA methyltransferase TrmD family. As to quaternary structure, homodimer.

It localises to the cytoplasm. It catalyses the reaction guanosine(37) in tRNA + S-adenosyl-L-methionine = N(1)-methylguanosine(37) in tRNA + S-adenosyl-L-homocysteine + H(+). Its function is as follows. Specifically methylates guanosine-37 in various tRNAs. The chain is tRNA (guanine-N(1)-)-methyltransferase from Symbiobacterium thermophilum (strain DSM 24528 / JCM 14929 / IAM 14863 / T).